A 129-amino-acid chain; its full sequence is Large ribosomal subunit protein bL20 (129 aa).

It belongs to the bacterial ribosomal protein bL20 family.

Its function is as follows. Binds directly to 23S ribosomal RNA and is necessary for the in vitro assembly process of the 50S ribosomal subunit. It is not involved in the protein synthesizing functions of that subunit. This Kineococcus radiotolerans (strain ATCC BAA-149 / DSM 14245 / SRS30216) protein is Large ribosomal subunit protein bL20.